The chain runs to 447 residues: Putative branched-chain amino acid carrier protein SAB1263c (447 aa).

12 consecutive transmembrane segments (helical) span residues 6 to 26, 40 to 60, 74 to 94, 114 to 134, 143 to 163, 193 to 213, 229 to 249, 290 to 310, 326 to 346, 350 to 370, 382 to 402, and 417 to 437; these read WVIG…IFPP, ILAF…VGAL, PKFS…LFAI, SSIA…YICL, IGSL…IKGY, GYLT…VNAV, LTAG…LGYI, LLGI…IGAV, FVLV…NAVI, IPVL…ILIA, IPVI…LGWL, and LEWF…GIFV.

It belongs to the branched chain amino acid transporter family.

The protein resides in the cell membrane. Functionally, component of the transport system for branched-chain amino acids (leucine, isoleucine and valine), which is coupled to a proton motive force (Potential). Contributes to NaCl tolerance. The polypeptide is Putative branched-chain amino acid carrier protein SAB1263c (Staphylococcus aureus (strain bovine RF122 / ET3-1)).